The primary structure comprises 380 residues: MKKPLGKIVASTALLISVAFSSSIASAAEEAKEKYLIGFNEQEAVSEFVEQVEANDEVAILSEEEEVEIELLHEFETIPVLSVELSPEDVDALELDPAISYIEEDAEVTTMAQSVPWGISRVQAPAAHNRGLTGSGVKVAVLDTGISTHPDLNIRGGASFVPGEPSTQDGNGHGTHVAGTIAALNNSIGVLGVAPSAELYAVKVLGASGSGSVSSIAQGLEWAGNNGMHVANLSLGSPSPSATLEQAVNSATSRGVLVVAASGNSGAGSISYPARYANAMAVGATDQNNNRASFSQYGAGLDIVAPGVNVQSTYPGSTYASLNGTSMATPHVAGAAALVKQKNPSWSNVQIRNHLKNTATSLGSTNLYGSGLVNAEAATR.

Residues 1 to 27 (MKKPLGKIVASTALLISVAFSSSIASA) form the signal peptide. The propeptide occupies 28-111 (AEEAKEKYLI…IEEDAEVTTM (84 aa)). The 78-residue stretch at 34–111 (KYLIGFNEQE…IEEDAEVTTM (78 aa)) folds into the Inhibitor I9 domain. A Ca(2+)-binding site is contributed by glutamine 113. One can recognise a Peptidase S8 domain in the interval 116–379 (PWGISRVQAP…SGLVNAEAAT (264 aa)). Aspartate 143 (charge relay system) is an active-site residue. Ca(2+) is bound at residue aspartate 151. Histidine 173 functions as the Charge relay system in the catalytic mechanism. The Ca(2+) site is built by leucine 184, asparagine 186, isoleucine 188, valine 190, alanine 274, tyrosine 276, and alanine 279. Serine 326 serves as the catalytic Charge relay system.

It belongs to the peptidase S8 family. Ca(2+) is required as a cofactor.

The protein resides in the secreted. This Shouchella clausii (Alkalihalobacillus clausii) protein is Alkaline protease.